Reading from the N-terminus, the 133-residue chain is Histone H2A.1 (133 aa).

The interval methionine 1–serine 23 is disordered. Serine 2 carries the post-translational modification N-acetylserine. An N6-acetyllysine mark is found at lysine 6, lysine 9, lysine 11, lysine 13, and lysine 18. Residue serine 123 is modified to Phosphoserine. Residue lysine 124 forms a Glycyl lysine isopeptide (Lys-Gly) (interchain with G-Cter in ubiquitin) linkage.

This sequence belongs to the histone H2A family. In terms of assembly, the nucleosome is a histone octamer containing two molecules each of H2A, H2B, H3 and H4 assembled in one H3-H4 heterotetramer and two H2A-H2B heterodimers. The octamer wraps approximately 147 bp of DNA. Monoubiquitination of Lys-124 gives a specific tag for epigenetic transcriptional repression. Post-translationally, acetylation occurs almost exclusively in the MAC.

The protein localises to the nucleus. It localises to the chromosome. Its function is as follows. Core component of nucleosome. Nucleosomes wrap and compact DNA into chromatin, limiting DNA accessibility to the cellular machineries which require DNA as a template. Histones thereby play a central role in transcription regulation, DNA repair, DNA replication and chromosomal stability. DNA accessibility is regulated via a complex set of post-translational modifications of histones, also called histone code, and nucleosome remodeling. This chain is Histone H2A.1 (HTA2), found in Tetrahymena thermophila (strain SB210).